Here is a 362-residue protein sequence, read N- to C-terminus: Quinolone epoxide rearrangement protein penF (362 aa).

His220 is a catalytic residue. The Broensted acid role is filled by Glu222.

This sequence belongs to the quinolone epoxide rearrangement protein penF family.

It catalyses the reaction [(1'E)-5'-(3',3'-dimethyloxiran-2'-yl)-3'-hydroxy-3'-methylpent-1'-en-1'-yl]-quinolinone B = yaequinolone D. Its pathway is secondary metabolite biosynthesis. It functions in the pathway alkaloid biosynthesis. The protein operates within mycotoxin biosynthesis. Quinolone epoxide rearrangement protein; part of the gene cluster that mediates the biosynthesis of penigequinolones, potent insecticidal alkaloids that contain a highly modified 10-carbon prenyl group. The first stage is catalyzed by the nonribosomal peptide synthetase penN that condenses anthranilic acid and O-methyl-L-tyrosine to produce 4'-methoxycyclopeptin. 4'-methoxycyclopeptin is then converted to 4'-methoxydehydrocyclopeptin by the ketoglutarate-dependent dioxygenase penM through dehydrogenation to form a double bond between C-alpha and C-beta of the O-methyltyrosine side chain. PenM also converts its first product methoxydehydrocyclopeptin to 4'-methoxycyclopenin. The following conversion of 4'methoxycyclopenin into 4'-methoxyviridicatin is catalyzed by the cyclopenase penL. 4'-methoxyviridicatin is the precursor of quinolone natural products, and is further converted to quinolinone B. The prenyltransferase penI then catalyzes the canonical Friedel-Crafts alkylation of quinolinone B with dimethylallyl cation to yield dimethylallyl quinolone, which is subjected to FAD-dependent dehydrogenation by the FAD-linked oxidoreductase penH to yield conjugated aryl diene. The delta(3') double bond then serves as the site of the second alkylation with DMAPP catalyzed by the prenyltransferase penG to yield a carbenium ion intermediate, which can be attacked by H(2)O to yield a styrenyl quinolone containing a C3'-hydroxyprenyl chain, or undergo cyclization to yield yaequinolones J1 and J2. The conversion of the styrenyl quinolone into the tetrahydrofuran-containing yaequinolone C is performed by the FAD-dependent monooxygenase penE and involves epoxidation of the terminal C7'-C8' olefin, followed by epoxide ring opening initiated by the C3' hydroxyl group. The predicted cysteine hydrolase penJ acts as an epoxide hydrolase that enhances the rate of the 5-exo-tet cyclization step, increasing the yield of yaequinolone C. PenF catalyzes the cationic rearrangement of the epoxide formed by penE (before ring opening to produce yaequinolone C) into yaequinolone D. Finally, the short-chain dehydrogenase/reductase (SDR)-like reductase penD, catalyzes both the dehydration of yaequinolone D and the reduction of the resulting oxonium to yield penigequinolone. In Penicillium thymicola, this protein is Quinolone epoxide rearrangement protein penF.